Consider the following 729-residue polypeptide: Fatty acid oxidation complex subunit alpha (729 aa).

Positions 1 to 189 (MLYQSETLQL…KVGLVDAVVA (189 aa)) are enoyl-CoA hydratase/isomerase. Substrate is bound at residue D296. The segment at 311–729 (SAPKQAAVLG…LLDVSISQPA (419 aa)) is 3-hydroxyacyl-CoA dehydrogenase. Residues M324, D343, 400-402 (VVE), K407, and S429 each bind NAD(+). The active-site For 3-hydroxyacyl-CoA dehydrogenase activity is the H450. Position 453 (N453) interacts with NAD(+). Residues N500 and Y660 each contribute to the substrate site.

The protein in the N-terminal section; belongs to the enoyl-CoA hydratase/isomerase family. In the C-terminal section; belongs to the 3-hydroxyacyl-CoA dehydrogenase family. As to quaternary structure, heterotetramer of two alpha chains (FadB) and two beta chains (FadA).

The catalysed reaction is a (3S)-3-hydroxyacyl-CoA + NAD(+) = a 3-oxoacyl-CoA + NADH + H(+). It catalyses the reaction a (3S)-3-hydroxyacyl-CoA = a (2E)-enoyl-CoA + H2O. It carries out the reaction a 4-saturated-(3S)-3-hydroxyacyl-CoA = a (3E)-enoyl-CoA + H2O. The enzyme catalyses (3S)-3-hydroxybutanoyl-CoA = (3R)-3-hydroxybutanoyl-CoA. The catalysed reaction is a (3Z)-enoyl-CoA = a 4-saturated (2E)-enoyl-CoA. It catalyses the reaction a (3E)-enoyl-CoA = a 4-saturated (2E)-enoyl-CoA. The protein operates within lipid metabolism; fatty acid beta-oxidation. Involved in the aerobic and anaerobic degradation of long-chain fatty acids via beta-oxidation cycle. Catalyzes the formation of 3-oxoacyl-CoA from enoyl-CoA via L-3-hydroxyacyl-CoA. It can also use D-3-hydroxyacyl-CoA and cis-3-enoyl-CoA as substrate. The sequence is that of Fatty acid oxidation complex subunit alpha from Yersinia enterocolitica serotype O:8 / biotype 1B (strain NCTC 13174 / 8081).